The chain runs to 241 residues: Carboxy-S-adenosyl-L-methionine synthase 1 (241 aa).

Residues Y37, 61-63, N131, and R198 contribute to the S-adenosyl-L-methionine site; that span reads GCS.

It belongs to the class I-like SAM-binding methyltransferase superfamily. Cx-SAM synthase family. As to quaternary structure, homodimer.

The enzyme catalyses prephenate + S-adenosyl-L-methionine = carboxy-S-adenosyl-L-methionine + 3-phenylpyruvate + H2O. Functionally, catalyzes the conversion of S-adenosyl-L-methionine (SAM) to carboxy-S-adenosyl-L-methionine (Cx-SAM). This Yersinia pseudotuberculosis serotype IB (strain PB1/+) protein is Carboxy-S-adenosyl-L-methionine synthase 1.